We begin with the raw amino-acid sequence, 135 residues long: Large ribosomal subunit protein eL32 (135 aa).

Residues 51–77 (GRDNKFRLKMKGKPRPPEPGYRSPRKV) form a disordered region.

This sequence belongs to the eukaryotic ribosomal protein eL32 family.

This Nanoarchaeum equitans (strain Kin4-M) protein is Large ribosomal subunit protein eL32 (rpl32e).